Reading from the N-terminus, the 396-residue chain is 1-deoxy-D-xylulose 5-phosphate reductoisomerase (396 aa).

NADPH-binding residues include Thr-10, Gly-11, Ser-12, Ile-13, and Asn-123. Lys-124 is a 1-deoxy-D-xylulose 5-phosphate binding site. Glu-125 contributes to the NADPH binding site. Asp-149 is a binding site for Mn(2+). Positions 150, 151, 185, and 208 each coordinate 1-deoxy-D-xylulose 5-phosphate. Glu-151 contacts Mn(2+). Gly-214 is an NADPH binding site. Positions 221, 226, 227, and 230 each coordinate 1-deoxy-D-xylulose 5-phosphate. Position 230 (Glu-230) interacts with Mn(2+).

This sequence belongs to the DXR family. Requires Mg(2+) as cofactor. Mn(2+) serves as cofactor.

The catalysed reaction is 2-C-methyl-D-erythritol 4-phosphate + NADP(+) = 1-deoxy-D-xylulose 5-phosphate + NADPH + H(+). It functions in the pathway isoprenoid biosynthesis; isopentenyl diphosphate biosynthesis via DXP pathway; isopentenyl diphosphate from 1-deoxy-D-xylulose 5-phosphate: step 1/6. Functionally, catalyzes the NADPH-dependent rearrangement and reduction of 1-deoxy-D-xylulose-5-phosphate (DXP) to 2-C-methyl-D-erythritol 4-phosphate (MEP). The sequence is that of 1-deoxy-D-xylulose 5-phosphate reductoisomerase from Shewanella sp. (strain MR-4).